The chain runs to 111 residues: Probable 4-amino-4-deoxy-L-arabinose-phosphoundecaprenol flippase subunit ArnE (111 aa).

At 1-37 the chain is on the cytoplasmic side; the sequence is MIWLVLILASLLSVTGQLCQKQATRPVAINKRRKHIA. A helical membrane pass occupies residues 38 to 58; the sequence is LWLGLGLVCLGLAMVLWLLVL. The EamA domain maps to 40–109; that stretch reads LGLGLVCLGL…IIGGIVILGS (70 aa). At 59 to 60 the chain is on the periplasmic side; sequence QT. The helical transmembrane segment at 61 to 81 threads the bilayer; that stretch reads VPVGIAYPMLSLNFVWVTLAA. Topologically, residues 82-87 are cytoplasmic; that stretch reads TKLWHE. Residues 88 to 108 traverse the membrane as a helical segment; the sequence is PVSFRHWCGVAFIIGGIVILG. The Periplasmic segment spans residues 109–111; sequence STV.

The protein belongs to the ArnE family. In terms of assembly, heterodimer of ArnE and ArnF.

It localises to the cell inner membrane. It participates in bacterial outer membrane biogenesis; lipopolysaccharide biosynthesis. Its function is as follows. Translocates 4-amino-4-deoxy-L-arabinose-phosphoundecaprenol (alpha-L-Ara4N-phosphoundecaprenol) from the cytoplasmic to the periplasmic side of the inner membrane. This Escherichia fergusonii (strain ATCC 35469 / DSM 13698 / CCUG 18766 / IAM 14443 / JCM 21226 / LMG 7866 / NBRC 102419 / NCTC 12128 / CDC 0568-73) protein is Probable 4-amino-4-deoxy-L-arabinose-phosphoundecaprenol flippase subunit ArnE.